Reading from the N-terminus, the 452-residue chain is Glucose-6-phosphate isomerase (452 aa).

The active-site Proton donor is glutamate 290. Catalysis depends on residues histidine 311 and lysine 425.

This sequence belongs to the GPI family.

It is found in the cytoplasm. The enzyme catalyses alpha-D-glucose 6-phosphate = beta-D-fructose 6-phosphate. Its pathway is carbohydrate biosynthesis; gluconeogenesis. It functions in the pathway carbohydrate degradation; glycolysis; D-glyceraldehyde 3-phosphate and glycerone phosphate from D-glucose: step 2/4. Its function is as follows. Catalyzes the reversible isomerization of glucose-6-phosphate to fructose-6-phosphate. This is Glucose-6-phosphate isomerase from Limosilactobacillus reuteri (strain DSM 20016) (Lactobacillus reuteri).